Here is a 752-residue protein sequence, read N- to C-terminus: Photosystem I P700 chlorophyll a apoprotein A1 (752 aa).

The next 8 helical transmembrane spans lie at 73 to 96, 159 to 182, 198 to 222, 294 to 312, 349 to 372, 388 to 414, 436 to 458, and 533 to 551; these read IFAA…FHGA, LYVT…FHYH, LNHH…HVSA, ISHH…GHMY, WHAQ…HHMY, LCIF…IFMV, AIIS…LYVH, and FLVH…LILL. [4Fe-4S] cluster contacts are provided by Cys-575 and Cys-584. The next 2 helical transmembrane spans lie at 591–612 and 666–688; these read HVFL…HFSW and LSAY…MFLF. Residue His-677 participates in chlorophyll a' binding. Residues Met-685 and Tyr-693 each coordinate chlorophyll a. A phylloquinone-binding site is contributed by Trp-694. The chain crosses the membrane as a helical span at residues 726–746; the sequence is AVGVAHYLLGGIATTWAFFHA.

This sequence belongs to the PsaA/PsaB family. In terms of assembly, the PsaA/B heterodimer binds the P700 chlorophyll special pair and subsequent electron acceptors. PSI consists of a core antenna complex that captures photons, and an electron transfer chain that converts photonic excitation into a charge separation. The cyanobacterial PSI reaction center is composed of one copy each of PsaA,B,C,D,E,F,I,J,K,L,M and X, and forms trimeric complexes. Requires PSI electron transfer chain: 5 chlorophyll a, 1 chlorophyll a', 2 phylloquinones and 3 4Fe-4S clusters. PSI core antenna: 90 chlorophyll a, 22 carotenoids, 3 phospholipids and 1 galactolipid. P700 is a chlorophyll a/chlorophyll a' dimer, A0 is one or more chlorophyll a, A1 is one or both phylloquinones and FX is a shared 4Fe-4S iron-sulfur center. as cofactor.

It localises to the cellular thylakoid membrane. The catalysed reaction is reduced [plastocyanin] + hnu + oxidized [2Fe-2S]-[ferredoxin] = oxidized [plastocyanin] + reduced [2Fe-2S]-[ferredoxin]. PsaA and PsaB bind P700, the primary electron donor of photosystem I (PSI), as well as the electron acceptors A0, A1 and FX. PSI is a plastocyanin/cytochrome c6-ferredoxin oxidoreductase, converting photonic excitation into a charge separation, which transfers an electron from the donor P700 chlorophyll pair to the spectroscopically characterized acceptors A0, A1, FX, FA and FB in turn. Oxidized P700 is reduced on the lumenal side of the thylakoid membrane by plastocyanin or cytochrome c6. The protein is Photosystem I P700 chlorophyll a apoprotein A1 of Mastigocladus laminosus (Fischerella sp.).